Here is a 451-residue protein sequence, read N- to C-terminus: Chromosomal replication initiator protein DnaA (451 aa).

Positions methionine 1–threonine 72 are domain I, interacts with DnaA modulators. Residues threonine 72 to alanine 114 are domain II. Positions glycine 81 to lysine 90 are enriched in polar residues. Residues glycine 81–glycine 106 are disordered. The segment at asparagine 115 to alanine 331 is domain III, AAA+ region. ATP contacts are provided by glycine 159, glycine 161, lysine 162, and threonine 163. Positions histidine 332 to glycine 451 are domain IV, binds dsDNA.

This sequence belongs to the DnaA family. Oligomerizes as a right-handed, spiral filament on DNA at oriC.

It is found in the cytoplasm. Plays an essential role in the initiation and regulation of chromosomal replication. ATP-DnaA binds to the origin of replication (oriC) to initiate formation of the DNA replication initiation complex once per cell cycle. Binds the DnaA box (a 9 base pair repeat at the origin) and separates the double-stranded (ds)DNA. Forms a right-handed helical filament on oriC DNA; dsDNA binds to the exterior of the filament while single-stranded (ss)DNA is stabiized in the filament's interior. The ATP-DnaA-oriC complex binds and stabilizes one strand of the AT-rich DNA unwinding element (DUE), permitting loading of DNA polymerase. After initiation quickly degrades to an ADP-DnaA complex that is not apt for DNA replication. Binds acidic phospholipids. This is Chromosomal replication initiator protein DnaA from Coxiella burnetii (strain CbuK_Q154) (Coxiella burnetii (strain Q154)).